A 120-amino-acid polypeptide reads, in one-letter code: Large ribosomal subunit protein uL22 (120 aa).

This sequence belongs to the universal ribosomal protein uL22 family. In terms of assembly, part of the 50S ribosomal subunit.

Functionally, this protein binds specifically to 23S rRNA; its binding is stimulated by other ribosomal proteins, e.g. L4, L17, and L20. It is important during the early stages of 50S assembly. It makes multiple contacts with different domains of the 23S rRNA in the assembled 50S subunit and ribosome. The globular domain of the protein is located near the polypeptide exit tunnel on the outside of the subunit, while an extended beta-hairpin is found that lines the wall of the exit tunnel in the center of the 70S ribosome. This is Large ribosomal subunit protein uL22 from Oenococcus oeni (strain ATCC BAA-331 / PSU-1).